The sequence spans 356 residues: CX3C chemokine receptor 1 (356 aa).

At 1-26 the chain is on the extracellular side; it reads MTTLYSDWATESFEYDESSEACFIGD. A helical transmembrane segment spans residues 27–47; that stretch reads IVAFGTIFLSIFYSLVFAFGL. Topologically, residues 48–68 are cytoplasmic; the sequence is VGNLLVVCALTSSRKPKSITD. The chain crosses the membrane as a helical span at residues 69–89; it reads IYLLNLALSDLLFVATLPFWT. Topologically, residues 90 to 105 are extracellular; sequence HYVISEQGFHNAVCKL. A disulfide bond links Cys103 and Cys176. Residues 106–126 form a helical membrane-spanning segment; that stretch reads TTALFFIGFFGGIFFITVISI. Topologically, residues 127–147 are cytoplasmic; sequence DRYMAIVLAANSINNRTVQHG. The chain crosses the membrane as a helical span at residues 148–168; the sequence is VTTSLGVWAAAILVAAPQFMF. At 169 to 195 the chain is on the extracellular side; it reads TKQKGNECLGDYPEVLQDIWPVLRNTE. Residues 196 to 216 form a helical membrane-spanning segment; that stretch reads ANFLGFLLPVLIMSYCYFRII. At 217 to 232 the chain is on the cytoplasmic side; that stretch reads QTLFSCKNHKKAKAIK. A helical transmembrane segment spans residues 233–253; it reads LILLVVIVFFLFWTPYNVMIF. Topologically, residues 254–277 are extracellular; it reads LETLKLYGFFPNCDMKRDLRLALS. Residues 278–298 form a helical membrane-spanning segment; the sequence is VTETVAFSHCCLNPLIYAFAG. At 299 to 356 the chain is on the cytoplasmic side; the sequence is QKFRRYLRHLSRKCQAVLCGRPVHVSFSPSESQRSRQESIVSSNFTHYTSDGDASLLL. Thr347 is subject to Phosphothreonine.

It belongs to the G-protein coupled receptor 1 family. As to quaternary structure, found in a ternary complex with CX3CL1 and ITGAV:ITGB3 or ITGA4:ITGB1. This protein is not N-glycosylated which is unusual for G-protein-coupled receptors.

The protein localises to the cell membrane. Functionally, receptor for the C-X3-C chemokine fractalkine (CX3CL1) present on many early leukocyte cells; CX3CR1-CX3CL1 signaling exerts distinct functions in different tissue compartments, such as immune response, inflammation, cell adhesion and chemotaxis. CX3CR1-CX3CL1 signaling mediates cell migratory functions. Responsible for the recruitment of natural killer (NK) cells to inflamed tissues. Acts as a regulator of inflammation process leading to atherogenesis by mediating macrophage and monocyte recruitment to inflamed atherosclerotic plaques, promoting cell survival. Involved in airway inflammation by promoting interleukin 2-producing T helper (Th2) cell survival in inflamed lung. Involved in the migration of circulating monocytes to non-inflamed tissues, where they differentiate into macrophages and dendritic cells. Acts as a negative regulator of angiogenesis, probably by promoting macrophage chemotaxis. Plays a key role in brain microglia by regulating inflammatory response in the central nervous system (CNS) and regulating synapse maturation. Required to restrain the microglial inflammatory response in the CNS and the resulting parenchymal damage in response to pathological stimuli. Involved in brain development by participating in synaptic pruning, a natural process during which brain microglia eliminates extra synapses during postnatal development. Synaptic pruning by microglia is required to promote the maturation of circuit connectivity during brain development. Acts as an important regulator of the gut microbiota by controlling immunity to intestinal bacteria and fungi. Expressed in lamina propria dendritic cells in the small intestine, which form transepithelial dendrites capable of taking up bacteria in order to provide defense against pathogenic bacteria. Required to initiate innate and adaptive immune responses against dissemination of commensal fungi (mycobiota) component of the gut: expressed in mononuclear phagocytes (MNPs) and acts by promoting induction of antifungal IgG antibodies response to confer protection against disseminated C.albicans or C.auris infection. Also acts as a receptor for C-C motif chemokine CCL26, inducing cell chemotaxis. In Oryctolagus cuniculus (Rabbit), this protein is CX3C chemokine receptor 1.